We begin with the raw amino-acid sequence, 102 residues long: Large ribosomal subunit protein bL21 (102 aa).

The protein belongs to the bacterial ribosomal protein bL21 family. In terms of assembly, part of the 50S ribosomal subunit. Contacts protein L20.

Functionally, this protein binds to 23S rRNA in the presence of protein L20. The sequence is that of Large ribosomal subunit protein bL21 from Bacillus licheniformis (strain ATCC 14580 / DSM 13 / JCM 2505 / CCUG 7422 / NBRC 12200 / NCIMB 9375 / NCTC 10341 / NRRL NRS-1264 / Gibson 46).